A 516-amino-acid polypeptide reads, in one-letter code: tRNA-guanine(15) transglycosylase (516 aa).

Asp93 (nucleophile) is an active-site residue. Residues Asp128 and Ala196 each coordinate substrate. 3 residues coordinate Zn(2+): Cys279, Cys281, and Cys284. Residues 488 to 502 (LSAVSERLGDEASVG) show a composition bias toward low complexity. The tract at residues 488 to 516 (LSAVSERLGDEASVGGDDGDDGGSASSAE) is disordered.

This sequence belongs to the archaeosine tRNA-ribosyltransferase family. Zn(2+) is required as a cofactor.

It catalyses the reaction guanosine(15) in tRNA + 7-cyano-7-deazaguanine = 7-cyano-7-carbaguanosine(15) in tRNA + guanine. It participates in tRNA modification; archaeosine-tRNA biosynthesis. Functionally, exchanges the guanine residue with 7-cyano-7-deazaguanine (preQ0) at position 15 in the dihydrouridine loop (D-loop) of archaeal tRNAs. The polypeptide is tRNA-guanine(15) transglycosylase (Haloferax volcanii (strain ATCC 29605 / DSM 3757 / JCM 8879 / NBRC 14742 / NCIMB 2012 / VKM B-1768 / DS2) (Halobacterium volcanii)).